The chain runs to 96 residues: Large ribosomal subunit protein bL27 (96 aa).

Residues 1–9 (MLRLDLQFF) constitute a propeptide that is removed on maturation.

The protein belongs to the bacterial ribosomal protein bL27 family. The N-terminus is cleaved by ribosomal processing cysteine protease Prp.

This Geobacillus sp. (strain WCH70) protein is Large ribosomal subunit protein bL27.